The primary structure comprises 414 residues: Tryptophan synthase beta chain (414 aa).

Basic and acidic residues predominate over residues 1-26; it reads MVSTFSRKDQNYKNDDLNQPSKEGRF. The segment at 1–27 is disordered; sequence MVSTFSRKDQNYKNDDLNQPSKEGRFG. At Lys109 the chain carries N6-(pyridoxal phosphate)lysine.

The protein belongs to the TrpB family. As to quaternary structure, tetramer of two alpha and two beta chains. It depends on pyridoxal 5'-phosphate as a cofactor.

It catalyses the reaction (1S,2R)-1-C-(indol-3-yl)glycerol 3-phosphate + L-serine = D-glyceraldehyde 3-phosphate + L-tryptophan + H2O. The protein operates within amino-acid biosynthesis; L-tryptophan biosynthesis; L-tryptophan from chorismate: step 5/5. The beta subunit is responsible for the synthesis of L-tryptophan from indole and L-serine. This Prochlorococcus marinus (strain MIT 9301) protein is Tryptophan synthase beta chain.